The chain runs to 370 residues: Lipoyl synthase 1, chloroplastic (370 aa).

Disordered regions lie at residues 1–25 (MMQS…PVCR) and 39–67 (EAAP…KKPA). A chloroplast-targeting transit peptide spans 1-37 (MMQSSLARPLPRPPIRPACGNPVCRSRPGSVSVARCR). [4Fe-4S] cluster contacts are provided by Cys95, Cys100, Cys106, Cys132, Cys136, Cys139, and Ser347. In terms of domain architecture, Radical SAM core spans 115-336 (GEGDGIATAT…KEYGESVGFR (222 aa)).

Belongs to the radical SAM superfamily. Lipoyl synthase family. [4Fe-4S] cluster is required as a cofactor.

The protein localises to the plastid. Its subcellular location is the chloroplast. It catalyses the reaction [[Fe-S] cluster scaffold protein carrying a second [4Fe-4S](2+) cluster] + N(6)-octanoyl-L-lysyl-[protein] + 2 oxidized [2Fe-2S]-[ferredoxin] + 2 S-adenosyl-L-methionine + 4 H(+) = [[Fe-S] cluster scaffold protein] + N(6)-[(R)-dihydrolipoyl]-L-lysyl-[protein] + 4 Fe(3+) + 2 hydrogen sulfide + 2 5'-deoxyadenosine + 2 L-methionine + 2 reduced [2Fe-2S]-[ferredoxin]. It participates in protein modification; protein lipoylation via endogenous pathway; protein N(6)-(lipoyl)lysine from octanoyl-[acyl-carrier-protein]: step 2/2. Its function is as follows. Catalyzes the radical-mediated insertion of two sulfur atoms into the C-6 and C-8 positions of the octanoyl moiety bound to the lipoyl domains of lipoate-dependent enzymes, thereby converting the octanoylated domains into lipoylated derivatives. This chain is Lipoyl synthase 1, chloroplastic, found in Oryza sativa subsp. indica (Rice).